Here is a 377-residue protein sequence, read N- to C-terminus: Probable sensor histidine kinase HK (377 aa).

Disordered stretches follow at residues 1 to 169 (MAHP…RPAD) and 346 to 377 (LPTP…TSDQ). Basic residues predominate over residues 10 to 54 (RLQRRHGARSGSSRCRHRRPVPRRRSRSRPRWRAARAHRRHHRRS). Positions 84–98 (RRPDPRGGANTDHHA) are enriched in basic and acidic residues. Basic residues-rich tracts occupy residues 99 to 115 (APRH…RRRD) and 137 to 146 (TTVRRRRQPR). Residues 146 to 350 (RITHPVGTAD…ELRITLPTPR (205 aa)) form the Histidine kinase domain. His149 is modified (phosphohistidine; by autocatalysis). Residues 352–377 (PFHEELPRITSSDTKDPNREHDTSDQ) are compositionally biased toward basic and acidic residues.

Post-translationally, autophosphorylated.

It carries out the reaction ATP + protein L-histidine = ADP + protein N-phospho-L-histidine.. Its function is as follows. Member of the two-component system HK/TcrA. Phosphorylates TcrA. In Mycobacterium tuberculosis (strain CDC 1551 / Oshkosh), this protein is Probable sensor histidine kinase HK.